Here is a 62-residue protein sequence, read N- to C-terminus: MIPVRCFTCGKVVSTAWKEFKERRDAGEDPKRILDDLGLERYCCRRMLLTHKETVEDLNPYQ.

Zn(2+) contacts are provided by C6, C9, C43, and C44.

It belongs to the archaeal Rpo10/eukaryotic RPB10 RNA polymerase subunit family. Part of the RNA polymerase complex. It depends on Zn(2+) as a cofactor.

The protein localises to the cytoplasm. It carries out the reaction RNA(n) + a ribonucleoside 5'-triphosphate = RNA(n+1) + diphosphate. DNA-dependent RNA polymerase (RNAP) catalyzes the transcription of DNA into RNA using the four ribonucleoside triphosphates as substrates. In Methanoculleus marisnigri (strain ATCC 35101 / DSM 1498 / JR1), this protein is DNA-directed RNA polymerase subunit Rpo10.